A 279-amino-acid polypeptide reads, in one-letter code: Putative ABC transporter ATP-binding protein GSU3001 (279 aa).

The region spanning 1-237 (MRFSVDLKAY…PAEMESVKLR (237 aa)) is the ABC transporter domain. 36-43 (GSNGSGKT) serves as a coordination point for ATP.

This sequence belongs to the ABC transporter superfamily.

The protein localises to the cell inner membrane. Functionally, probably part of an ABC transporter complex. Responsible for energy coupling to the transport system. This chain is Putative ABC transporter ATP-binding protein GSU3001, found in Geobacter sulfurreducens (strain ATCC 51573 / DSM 12127 / PCA).